Reading from the N-terminus, the 378-residue chain is Ribosomal RNA large subunit methyltransferase G (378 aa).

The protein belongs to the methyltransferase superfamily. RlmG family.

It is found in the cytoplasm. It catalyses the reaction guanosine(1835) in 23S rRNA + S-adenosyl-L-methionine = N(2)-methylguanosine(1835) in 23S rRNA + S-adenosyl-L-homocysteine + H(+). In terms of biological role, specifically methylates the guanine in position 1835 (m2G1835) of 23S rRNA. This Shewanella putrefaciens (strain CN-32 / ATCC BAA-453) protein is Ribosomal RNA large subunit methyltransferase G.